The sequence spans 647 residues: Threonine--tRNA ligase (647 aa).

In terms of domain architecture, TGS spans 1–61; that stretch reads MIKITFPDGA…EEDGSIEIVT (61 aa). Residues 240-538 form a catalytic region; that stretch reads DHRKLGKELD…LIETYKGAFP (299 aa). Residues C334, H385, and H515 each contribute to the Zn(2+) site.

Belongs to the class-II aminoacyl-tRNA synthetase family. Homodimer. The cofactor is Zn(2+).

The protein resides in the cytoplasm. It carries out the reaction tRNA(Thr) + L-threonine + ATP = L-threonyl-tRNA(Thr) + AMP + diphosphate + H(+). Catalyzes the attachment of threonine to tRNA(Thr) in a two-step reaction: L-threonine is first activated by ATP to form Thr-AMP and then transferred to the acceptor end of tRNA(Thr). Also edits incorrectly charged L-seryl-tRNA(Thr). The sequence is that of Threonine--tRNA ligase from Streptococcus pyogenes serotype M3 (strain ATCC BAA-595 / MGAS315).